The following is a 426-amino-acid chain: Transcription termination factor Rho (426 aa).

Positions 58-131 (QSLARGYLDI…VRVEAVNGLD (74 aa)) constitute a Rho RNA-BD domain. ATP-binding positions include 176-181 (GRGQRA), 188-193 (KAGKTT), and R219.

It belongs to the Rho family. As to quaternary structure, homohexamer. The homohexamer assembles into an open ring structure.

Its function is as follows. Facilitates transcription termination by a mechanism that involves Rho binding to the nascent RNA, activation of Rho's RNA-dependent ATPase activity, and release of the mRNA from the DNA template. In Deinococcus radiodurans (strain ATCC 13939 / DSM 20539 / JCM 16871 / CCUG 27074 / LMG 4051 / NBRC 15346 / NCIMB 9279 / VKM B-1422 / R1), this protein is Transcription termination factor Rho.